The chain runs to 250 residues: Probable transcriptional regulatory protein tll0175 (250 aa).

It belongs to the TACO1 family.

It localises to the cytoplasm. The protein is Probable transcriptional regulatory protein tll0175 of Thermosynechococcus vestitus (strain NIES-2133 / IAM M-273 / BP-1).